The primary structure comprises 100 residues: Small ribosomal subunit protein uS14c (100 aa).

The protein belongs to the universal ribosomal protein uS14 family. Part of the 30S ribosomal subunit.

The protein resides in the plastid. It localises to the chloroplast. In terms of biological role, binds 16S rRNA, required for the assembly of 30S particles. The polypeptide is Small ribosomal subunit protein uS14c (Cryptomeria japonica (Japanese cedar)).